The chain runs to 111 residues: Large ribosomal subunit protein P2 (111 aa).

The tract at residues 81–111 (AAGGAAAPAAEEKKEEEKEESDEDMGFGLFD) is disordered. Residue Ser-101 is modified to Phosphoserine.

This sequence belongs to the eukaryotic ribosomal protein P1/P2 family. As to quaternary structure, P1 and P2 exist as dimers at the large ribosomal subunit.

In terms of biological role, plays an important role in the elongation step of protein synthesis. In Aspergillus fumigatus (strain ATCC MYA-4609 / CBS 101355 / FGSC A1100 / Af293) (Neosartorya fumigata), this protein is Large ribosomal subunit protein P2.